Here is a 330-residue protein sequence, read N- to C-terminus: Complement factor H-related protein 3 (330 aa).

The N-terminal stretch at 1 to 18 (MLLLINVILTLWVSCANG) is a signal peptide. Sushi domains lie at 22 to 84 (PCDF…VPCL), 85 to 142 (RKCY…RCIR), 144 to 205 (RTCS…ICIN), 208 to 266 (EKCG…RCIH), and 267 to 330 (PCII…PRCE). Disulfide bonds link cysteine 23-cysteine 72, cysteine 55-cysteine 83, cysteine 87-cysteine 129, cysteine 114-cysteine 140, cysteine 146-cysteine 192, and cysteine 175-cysteine 203. Asparagine 108 carries N-linked (GlcNAc...) asparagine glycosylation. N-linked (GlcNAc...) asparagine glycosylation is found at asparagine 185 and asparagine 205. 4 disulfide bridges follow: cysteine 210–cysteine 253, cysteine 239–cysteine 264, cysteine 268–cysteine 319, and cysteine 302–cysteine 329. N-linked (GlcNAc...) asparagine glycosylation occurs at asparagine 309.

As to expression, expressed by the liver and secreted in plasma.

Its subcellular location is the secreted. In terms of biological role, might be involved in complement regulation. This is Complement factor H-related protein 3 (CFHR3) from Homo sapiens (Human).